A 212-amino-acid chain; its full sequence is 2,3-bisphosphoglycerate-dependent phosphoglycerate mutase (212 aa).

Substrate is bound by residues 9-16 (RHGQSEWN), 22-23 (TG), Arg-61, 88-91 (ERDY), Lys-99, 115-116 (RR), and 159-160 (GN). His-10 (tele-phosphohistidine intermediate) is an active-site residue. Catalysis depends on Glu-88, which acts as the Proton donor/acceptor.

It belongs to the phosphoglycerate mutase family. BPG-dependent PGAM subfamily. Homodimer.

The catalysed reaction is (2R)-2-phosphoglycerate = (2R)-3-phosphoglycerate. It participates in carbohydrate degradation; glycolysis; pyruvate from D-glyceraldehyde 3-phosphate: step 3/5. Functionally, catalyzes the interconversion of 2-phosphoglycerate and 3-phosphoglycerate. The polypeptide is 2,3-bisphosphoglycerate-dependent phosphoglycerate mutase (Methylorubrum populi (strain ATCC BAA-705 / NCIMB 13946 / BJ001) (Methylobacterium populi)).